Reading from the N-terminus, the 274-residue chain is Ribose-5-phosphate isomerase (274 aa).

The protein belongs to the ribose 5-phosphate isomerase family.

Its subcellular location is the cytoplasm. The catalysed reaction is aldehydo-D-ribose 5-phosphate = D-ribulose 5-phosphate. Its pathway is carbohydrate degradation; pentose phosphate pathway; D-ribose 5-phosphate from D-ribulose 5-phosphate (non-oxidative stage): step 1/1. This is Ribose-5-phosphate isomerase (rki1) from Schizosaccharomyces pombe (strain 972 / ATCC 24843) (Fission yeast).